A 516-amino-acid polypeptide reads, in one-letter code: Glycerol-3-phosphate dehydrogenase 1 (516 aa).

Position 28 to 56 (28 to 56 (DVIVIGGGITGVGIALDAATRGLTVALVE)) interacts with FAD.

This sequence belongs to the FAD-dependent glycerol-3-phosphate dehydrogenase family. The cofactor is FAD.

It is found in the cytoplasm. The catalysed reaction is a quinone + sn-glycerol 3-phosphate = dihydroxyacetone phosphate + a quinol. This is Glycerol-3-phosphate dehydrogenase 1 (glpD1) from Mycobacterium bovis (strain ATCC BAA-935 / AF2122/97).